A 36-amino-acid chain; its full sequence is Cytochrome b6-f complex subunit 5 (36 aa).

A helical transmembrane segment spans residues 5-25 (LLSGIVLGLIPITILGLLMAA).

The protein belongs to the PetG family. The 4 large subunits of the cytochrome b6-f complex are cytochrome b6, subunit IV (17 kDa polypeptide, PetD), cytochrome f and the Rieske protein, while the 4 small subunits are PetG, PetL, PetM and PetN. The complex functions as a dimer.

The protein localises to the plastid. Its subcellular location is the chloroplast thylakoid membrane. Its function is as follows. Component of the cytochrome b6-f complex, which mediates electron transfer between photosystem II (PSII) and photosystem I (PSI), cyclic electron flow around PSI, and state transitions. PetG is required for either the stability or assembly of the cytochrome b6-f complex. This chain is Cytochrome b6-f complex subunit 5, found in Cyanidioschyzon merolae (strain NIES-3377 / 10D) (Unicellular red alga).